Here is a 274-residue protein sequence, read N- to C-terminus: 3-methyl-2-oxobutanoate hydroxymethyltransferase (274 aa).

Mg(2+) is bound by residues aspartate 49 and aspartate 88. 3-methyl-2-oxobutanoate-binding positions include aspartate 49–serine 50, aspartate 88, and lysine 118. Residue glutamate 120 coordinates Mg(2+). The active-site Proton acceptor is the glutamate 187.

The protein belongs to the PanB family. In terms of assembly, homodecamer; pentamer of dimers. Mg(2+) serves as cofactor.

Its subcellular location is the cytoplasm. It catalyses the reaction 3-methyl-2-oxobutanoate + (6R)-5,10-methylene-5,6,7,8-tetrahydrofolate + H2O = 2-dehydropantoate + (6S)-5,6,7,8-tetrahydrofolate. The protein operates within cofactor biosynthesis; (R)-pantothenate biosynthesis; (R)-pantoate from 3-methyl-2-oxobutanoate: step 1/2. In terms of biological role, catalyzes the reversible reaction in which hydroxymethyl group from 5,10-methylenetetrahydrofolate is transferred onto alpha-ketoisovalerate to form ketopantoate. The protein is 3-methyl-2-oxobutanoate hydroxymethyltransferase of Rhodopseudomonas palustris (strain HaA2).